A 49-amino-acid polypeptide reads, in one-letter code: Large ribosomal subunit protein bL33 (49 aa).

It belongs to the bacterial ribosomal protein bL33 family.

The polypeptide is Large ribosomal subunit protein bL33 (Syntrophomonas wolfei subsp. wolfei (strain DSM 2245B / Goettingen)).